We begin with the raw amino-acid sequence, 687 residues long: Variant-specific surface protein VSP4A1 (687 aa).

The first 14 residues, 1–14 (MLLTAFYVVLGSFA), serve as a signal peptide directing secretion. Topologically, residues 15–660 (APCQQDGDHI…SGLSTGAIAG (646 aa)) are extracellular. A helical membrane pass occupies residues 661-681 (ISVAAIVVVGGLVGFLCWWFI). The Cytoplasmic portion of the chain corresponds to 682 to 687 (CRGKAQ).

The protein belongs to the Giardia variant surface protein family. O-glycosylated. The major glycan is a trisaccharide with Glc at the reducing terminus. Post-translationally, palmitoylated.

The protein resides in the cell membrane. The sequence is that of Variant-specific surface protein VSP4A1 from Giardia intestinalis (Giardia lamblia).